The primary structure comprises 585 residues: Putative indole-3-acetic acid-amido synthetase GH3.9 (585 aa).

The protein belongs to the IAA-amido conjugating enzyme family.

Catalyzes the synthesis of indole-3-acetic acid (IAA)-amino acid conjugates, providing a mechanism for the plant to cope with the presence of excess auxin. In Arabidopsis thaliana (Mouse-ear cress), this protein is Putative indole-3-acetic acid-amido synthetase GH3.9 (GH3.9).